Consider the following 273-residue polypeptide: Urease accessory protein UreD (273 aa).

Residues 1-29 (MLMRTATPLDQPRAIGSARVSSKRVNGGS) form a disordered region.

Belongs to the UreD family. UreD, UreF and UreG form a complex that acts as a GTP-hydrolysis-dependent molecular chaperone, activating the urease apoprotein by helping to assemble the nickel containing metallocenter of UreC. The UreE protein probably delivers the nickel.

Its subcellular location is the cytoplasm. Functionally, required for maturation of urease via the functional incorporation of the urease nickel metallocenter. The sequence is that of Urease accessory protein UreD from Roseobacter denitrificans (strain ATCC 33942 / OCh 114) (Erythrobacter sp. (strain OCh 114)).